The sequence spans 512 residues: Proline--tRNA ligase (512 aa).

The span at 460–470 shows a compositional bias: acidic residues; it reads SDEDDEQDTTD. Positions 460-484 are disordered; the sequence is SDEDDEQDTTDENMGVNNDTTVESN.

This sequence belongs to the class-II aminoacyl-tRNA synthetase family. ProS type 3 subfamily. Homodimer.

It localises to the cytoplasm. It catalyses the reaction tRNA(Pro) + L-proline + ATP = L-prolyl-tRNA(Pro) + AMP + diphosphate. In terms of biological role, catalyzes the attachment of proline to tRNA(Pro) in a two-step reaction: proline is first activated by ATP to form Pro-AMP and then transferred to the acceptor end of tRNA(Pro). The sequence is that of Proline--tRNA ligase from Haloquadratum walsbyi (strain DSM 16790 / HBSQ001).